The following is a 242-amino-acid chain: uncharacterized protein (242 aa).

Residues 57-67 (SPTSQKTSASG) show a composition bias toward polar residues. A disordered region spans residues 57-78 (SPTSQKTSASGQEEPDPLHDKS). The DUF1279 domain occupies 76–188 (DKSSGLIQRF…GYMSTPPPVK (113 aa)). A helical membrane pass occupies residues 92–114 (YGKVMIPVHLLTSTMWFGTFYYA). Residues 188-237 (KEYLQEKMEETKERISGKMEETKDRFSERMEETKDKFNEKLQETKDKVSF) are a coiled coil. Residues 198–236 (TKERISGKMEETKDRFSERMEETKDKFNEKLQETKDKVS) show a composition bias toward basic and acidic residues. The disordered stretch occupies residues 198 to 242 (TKERISGKMEETKDRFSERMEETKDKFNEKLQETKDKVSFRKKKE).

Its subcellular location is the membrane. This is an uncharacterized protein from Danio rerio (Zebrafish).